A 298-amino-acid polypeptide reads, in one-letter code: Putative GATA zinc finger domain-containing protein 25 (298 aa).

A coiled-coil region spans residues 4-37; sequence DNKNKNDNYQESIQRIVNQRNNLLKEIENKINQQ. The disordered stretch occupies residues 148–227; it reads QQQLQQSHTK…RGRPSKPKPE (80 aa). A compositionally biased stretch (acidic residues) spans 183-202; that stretch reads EENEENEENEENEENEENEE. Positions 203–212 are enriched in basic and acidic residues; it reads NKEKDVEVAK. The span at 214-223 shows a compositional bias: basic residues; the sequence is NKPKRGRPSK. Residues 229-256 form a GATA-type; degenerate zinc finger; that stretch reads CFRYGTRSCPYWRKNVIKGELVDVCNAC.

This chain is Putative GATA zinc finger domain-containing protein 25 (gtaY), found in Dictyostelium discoideum (Social amoeba).